A 373-amino-acid polypeptide reads, in one-letter code: Spermidine/putrescine import ATP-binding protein PotA (373 aa).

Residues 8–238 (FELRGVSKYF…PANLYVARFV (231 aa)) form the ABC transporter domain. Residue 40-47 (GPSGCGKT) coordinates ATP.

This sequence belongs to the ABC transporter superfamily. Spermidine/putrescine importer (TC 3.A.1.11.1) family. The complex is composed of two ATP-binding proteins (PotA), two transmembrane proteins (PotB and PotC) and a solute-binding protein (PotD).

The protein localises to the cell inner membrane. It carries out the reaction ATP + H2O + polyamine-[polyamine-binding protein]Side 1 = ADP + phosphate + polyamineSide 2 + [polyamine-binding protein]Side 1.. Functionally, part of the ABC transporter complex PotABCD involved in spermidine/putrescine import. Responsible for energy coupling to the transport system. The sequence is that of Spermidine/putrescine import ATP-binding protein PotA from Oleidesulfovibrio alaskensis (strain ATCC BAA-1058 / DSM 17464 / G20) (Desulfovibrio alaskensis).